Here is a 365-residue protein sequence, read N- to C-terminus: IgG receptor FcRn large subunit p51 (365 aa).

An N-terminal signal peptide occupies residues 1 to 21 (MGMPLPWALSLLLVLLPQTWG). Positions 22-110 (SETRPPLMYH…KTLEKILNGT (89 aa)) are alpha-1. At 22 to 297 (SETRPPLMYH…VDLDSSARSS (276 aa)) the chain is on the extracellular side. 4 N-linked (GlcNAc...) asparagine glycosylation sites follow: Asn-108, Asn-125, Asn-149, and Asn-246. Residues 111 to 200 (YTLQGLLGCE…ERGRRNLEWK (90 aa)) form an alpha-2 region. Intrachain disulfides connect Cys-119-Cys-182 and Cys-221-Cys-275. Residues 201–290 (EPPSMRLKAR…GLAQPLTVDL (90 aa)) are alpha-3. The 88-residue stretch at 202 to 289 (PPSMRLKARP…EGLAQPLTVD (88 aa)) folds into the Ig-like C1-type domain. A connecting peptide region spans residues 291–297 (DSSARSS). Residues 298-321 (VPVVGIVLGLLLVVVAIAGGVLLW) traverse the membrane as a helical segment. The Cytoplasmic segment spans residues 322 to 365 (GRMRSGLPAPWLSLSGDDSGDLLPGGNLPPEAEPQGANAFPATS). Ser-334 carries the post-translational modification Phosphoserine. The segment at 343-365 (LLPGGNLPPEAEPQGANAFPATS) is disordered.

It belongs to the immunoglobulin superfamily. FcRn complex consists of two subunits: p51, and p14 which is equivalent to beta-2-microglobulin. It forms an MHC class I-like heterodimer. Interacts with albumin/ALB; this interaction regulates ALB homeostasis. Intestinal epithelium of suckling rodents. Expressed in neonatal intestine and fetal yolk sac.

Its subcellular location is the cell membrane. It localises to the endosome membrane. Functionally, cell surface receptor that transfers passive humoral immunity from the mother to the newborn. Binds to the Fc region of monomeric immunoglobulin gamma and mediates its selective uptake from milk. IgG in the milk is bound at the apical surface of the intestinal epithelium. The resultant FcRn-IgG complexes are transcytosed across the intestinal epithelium and IgG is released from FcRn into blood or tissue fluids. Throughout life, contributes to effective humoral immunity by recycling IgG and extending its half-life in the circulation. Mechanistically, monomeric IgG binding to FcRn in acidic endosomes of endothelial and hematopoietic cells recycles IgG to the cell surface where it is released into the circulation. In addition of IgG, regulates homeostasis of the other most abundant circulating protein albumin/ALB. The sequence is that of IgG receptor FcRn large subunit p51 (Fcgrt) from Mus musculus (Mouse).